The primary structure comprises 209 residues: Probable glutathione peroxidase 8 (209 aa).

At M1 the chain carries N-acetylmethionine. The chain crosses the membrane as a helical span at residues 18-40; the sequence is IFAVLLSMVLCTVMLFLLQLKFL. C79 is an active-site residue.

The protein belongs to the glutathione peroxidase family.

Its subcellular location is the membrane. It carries out the reaction 2 glutathione + H2O2 = glutathione disulfide + 2 H2O. This Mus musculus (Mouse) protein is Probable glutathione peroxidase 8 (Gpx8).